The sequence spans 379 residues: Alanine racemase (379 aa).

The Proton acceptor; specific for D-alanine role is filled by Lys37. Residue Lys37 is modified to N6-(pyridoxal phosphate)lysine. Arg139 lines the substrate pocket. The active-site Proton acceptor; specific for L-alanine is the Tyr266. Met314 provides a ligand contact to substrate.

It belongs to the alanine racemase family. It depends on pyridoxal 5'-phosphate as a cofactor.

It carries out the reaction L-alanine = D-alanine. It functions in the pathway amino-acid biosynthesis; D-alanine biosynthesis; D-alanine from L-alanine: step 1/1. Functionally, catalyzes the interconversion of L-alanine and D-alanine. May also act on other amino acids. The sequence is that of Alanine racemase (alr) from Sorangium cellulosum (strain So ce56) (Polyangium cellulosum (strain So ce56)).